The following is a 710-amino-acid chain: Zinc finger and BTB domain-containing protein 24 (710 aa).

Positions 37-103 constitute a BTB domain; that stretch reads CDITLIVENV…IYTGYLHASE (67 aa). Disordered regions lie at residues 134-176 and 202-256; these read APKP…EGRS and EEDS…SRRR. The segment at residues 159–171 is a DNA-binding region (a.T hook); sequence KRKRGRPRKANGL. 2 stretches are compositionally biased toward basic and acidic residues: residues 202-219 and 231-244; these read EEDS…KESE and PAEK…KAGD. C2H2-type zinc fingers lie at residues 293 to 315, 321 to 343, 349 to 371, 377 to 399, 405 to 427, 433 to 455, 461 to 483, and 489 to 511; these read ARCK…QRRH, FKCN…TRMH, YTCT…MSLH, FTCD…YRVH, PECS…LRTH, FTCE…IRIH, YSCS…CILH, and FSCP…LKIH. The interval 651-676 is disordered; sequence EQTTSSVPAADTGARATPVPSTRPGA.

This sequence belongs to the krueppel C2H2-type zinc-finger protein family. In terms of assembly, interacts with MN1. As to expression, widely expressed. Highest level in liver, testis and kidney.

It is found in the nucleus. In terms of biological role, may be involved in BMP2-induced transcription. This is Zinc finger and BTB domain-containing protein 24 (Zbtb24) from Mus musculus (Mouse).